Consider the following 372-residue polypeptide: UDP-2-acetamido-2,6-beta-L-arabino-hexul-4-ose reductase (372 aa).

Residues 7-30 (GANG…EVVP), Leu-53, Tyr-103, and Lys-107 each bind NAD(+). Tyr-103 (proton acceptor) is an active-site residue. Residues Asn-132 and 279-282 (HPGV) contribute to the substrate site.

The protein belongs to the NAD(P)-dependent epimerase/dehydratase family. Homodimer.

It catalyses the reaction UDP-2-acetamido-2,6-dideoxy-beta-L-arabino-hex-4-ulose + NADH + H(+) = UDP-2-acetamido-2,6-dideoxy-beta-L-talose + NAD(+). The enzyme catalyses UDP-2-acetamido-2,6-dideoxy-beta-L-arabino-hex-4-ulose + NADPH + H(+) = UDP-2-acetamido-2,6-dideoxy-beta-L-talose + NADP(+). The protein operates within bacterial outer membrane biogenesis; LPS O-antigen biosynthesis. In terms of biological role, bifunctional enzyme that mediates C-3 epimerization of the second intermediate followed by reduction at C-4 during serogroup O11 O-antigen biosynthesis, thus catalyzing the conversion of UDP-N-acetyl-D-glucosamine to precursors for the biosynthesis of O antigen. The sequence is that of UDP-2-acetamido-2,6-beta-L-arabino-hexul-4-ose reductase from Pseudomonas aeruginosa (strain ATCC 29260 / BCRC 12902 / CIP 102967 / NCIMB 11965 / PA103).